Reading from the N-terminus, the 1091-residue chain is Sodium/potassium exporting P-type ATPase 1 (1091 aa).

At 1–63 (MGEGTTKENN…LGDDTKIDYK (63 aa)) the chain is on the cytoplasmic side. A helical membrane pass occupies residues 64-84 (AMVLHQVCNAMIMVLLISMII). The Extracellular segment spans residues 85-90 (SFAMHD). The chain crosses the membrane as a helical span at residues 91–111 (WITGGVISFVIAVNVLIGLVQ). At 112-282 (EYKATKTMNS…TNVGTPLHRK (171 aa)) the chain is on the cytoplasmic side. A helical transmembrane segment spans residues 283 to 303 (LSKLAVLLFWIAVLFAIIVMA). Residues 304–312 (SQKFDVDKR) are Extracellular-facing. A helical membrane pass occupies residues 313 to 333 (VAIYAICVALSMIPSSLVVVL). Residues 334–815 (TITMSVGAAV…RRMTDNIQKF (482 aa)) lie on the Cytoplasmic side of the membrane. Catalysis depends on D369, which acts as the 4-aspartylphosphate intermediate. Residues D369 and T371 each coordinate Mg(2+). The ATP site is built by T371 and E483. Positions 499 to 525 (ALTGEKSTNQSNENDQSSLSQHNEKPG) are disordered. Residues 503–519 (EKSTNQSNENDQSSLSQ) are compositionally biased toward polar residues. ATP is bound by residues K561, R606, T673, G674, D675, R732, and K738. Mg(2+) is bound at residue D757. Position 760 (N760) interacts with ATP. A helical transmembrane segment spans residues 816–836 (VLQLLAENVAQALYLIIGLVF). Over 837-848 (RDENGKSVFPLS) the chain is Extracellular. Residues 849 to 869 (PVEVLWIIVVTSCFPAMGLGL) form a helical membrane-spanning segment. The Cytoplasmic portion of the chain corresponds to 870-885 (EKAAPDLMDRPPHDSE). Residues 886-906 (VGIFTWEVIIDTFAYGIIMTG) traverse the membrane as a helical segment. The Extracellular segment spans residues 907-943 (SCMASFTGSLYGINSGRLGHDCDGTYNSSCRDVYRSR). A helical transmembrane segment spans residues 944 to 964 (SAAFATMTWCALILAWEVVDM). Residues 965 to 991 (RRSFFRMHPDTDSPVKEFFRSIWGNQF) are Cytoplasmic-facing. A helical membrane pass occupies residues 992–1012 (LFWSIIFGFVSAFPVVYIPVI). Topologically, residues 1013–1021 (NDKVFLHKP) are extracellular. The chain crosses the membrane as a helical span at residues 1022-1042 (IGAEWGLAIAFTIAFWIGAEL). At 1043–1091 (YKCGKRRYFKTQRAHNPENDLESNNKRDPFEAYSTSTTIHTEVNIGIKQ) the chain is on the cytoplasmic side.

It belongs to the cation transport ATPase (P-type) (TC 3.A.3) family. Type IID subfamily. Requires Mg(2+) as cofactor. Post-translationally, the active site is phosphorylated in presence of sodium or potassium and in conditions of higher pH. Not phosphorylated in presence of calcium ions.

It localises to the cell membrane. The enzyme catalyses Na(+)(in) + ATP + H2O = Na(+)(out) + ADP + phosphate + H(+). The catalysed reaction is K(+)(in) + ATP + H2O = K(+)(out) + ADP + phosphate + H(+). Catalyzes the hydrolysis of ATP coupled with the export of sodium and potassium from the cell. May export potassium less efficiently. May transport other cations such as lithium. Sodium/potassium efflux ATPases are involved in salt tolerance and maintaining the membrane potential across the plasma membrane in high salinity (Na+) or alkaline (K+) environments. Is negatively modulated by SIS2/HAL3. This chain is Sodium/potassium exporting P-type ATPase 1, found in Saccharomyces cerevisiae (strain ATCC 204508 / S288c) (Baker's yeast).